A 529-amino-acid polypeptide reads, in one-letter code: uncharacterized protein (529 aa).

This sequence to M.jannaschii MJ1451.

This is an uncharacterized protein from Methanothermobacter thermautotrophicus (strain ATCC 29096 / DSM 1053 / JCM 10044 / NBRC 100330 / Delta H) (Methanobacterium thermoautotrophicum).